Consider the following 314-residue polypeptide: NAC domain-containing protein 10 (314 aa).

Positions 18–39 (VSNTDHPSVQLKDQSQSCVTSR) are enriched in polar residues. 2 disordered regions span residues 18-48 (VSNTDHPSVQLKDQSQSCVTSRPDSKISAET) and 150-182 (YTTGTRKRRKVSTDEEGHETRWHKTGKTRPVLS). In terms of domain architecture, NAC spans 77–236 (LPAGVKFDPS…EPVLSKVFYQ (160 aa)). Positions 160 to 171 (VSTDEEGHETRW) are enriched in basic and acidic residues. Residues 187–242 (TGFKKILVLYTNYGRQKKPEKTNWVMHQYHLGSSEDEKDGEPVLSKVFYQTQPRQC) mediate DNA binding.

Expressed in protoxylem and elongating interfascicular fiber cells of elongating internodes, developing metaxylem cells and interfascicular fibers of non-elongating internodes and developing secondary xylem of roots.

The protein localises to the nucleus. Functionally, transcriptional activator that plays a regulatory role in the development of secondary cell wall fibers. Is a direct target of SND1. In Arabidopsis thaliana (Mouse-ear cress), this protein is NAC domain-containing protein 10.